The sequence spans 830 residues: Periplasmic nitrate reductase 2 (830 aa).

The segment at residues 1–31 is a signal peptide (tat-type signal); that stretch reads MKVSRRKFIKAQAVASAAAAAGISIPISASN. Positions 41-97 constitute a 4Fe-4S Mo/W bis-MGD-type domain; it reads ITWEKAPCRFCGTGCSVNVGTKEGKVVATHGDIKSPVNRGLNCVKGYFLSKIMYGKD. Positions 48, 51, 55, and 83 each coordinate [4Fe-4S] cluster. Residues Lys-85, Gln-152, Asn-177, Cys-181, 245–249, 264–266, Met-374, Gln-378, Asn-484, 510–511, Lys-533, Asp-560, and 720–729 each bind Mo-bis(molybdopterin guanine dinucleotide); these read STFEH, QSD, SE, and TGRVIEHWHS. Trp-796 is a binding site for substrate. 2 residues coordinate Mo-bis(molybdopterin guanine dinucleotide): Asn-804 and Lys-821.

This sequence belongs to the prokaryotic molybdopterin-containing oxidoreductase family. NasA/NapA/NarB subfamily. Component of the periplasmic nitrate reductase NapAB complex composed of NapA and NapB. [4Fe-4S] cluster is required as a cofactor. The cofactor is Mo-bis(molybdopterin guanine dinucleotide). In terms of processing, predicted to be exported by the Tat system. The position of the signal peptide cleavage has not been experimentally proven.

Its subcellular location is the periplasm. The catalysed reaction is 2 Fe(II)-[cytochrome] + nitrate + 2 H(+) = 2 Fe(III)-[cytochrome] + nitrite + H2O. Catalytic subunit of the periplasmic nitrate reductase complex NapAB. Receives electrons from NapB and catalyzes the reduction of nitrate to nitrite. This is Periplasmic nitrate reductase 2 from Photobacterium profundum (strain SS9).